The primary structure comprises 370 residues: 3-isopropylmalate dehydrogenase (370 aa).

77–90 (GPKWDSVPYEVRPE) is a binding site for NAD(+). Substrate-binding residues include Arg97, Arg107, Arg135, and Asp226. Positions 226, 250, and 254 each coordinate Mg(2+). Residue 290 to 302 (GSAPDIAGQGLAN) participates in NAD(+) binding.

The protein belongs to the isocitrate and isopropylmalate dehydrogenases family. LeuB type 1 subfamily. Homodimer. Requires Mg(2+) as cofactor. The cofactor is Mn(2+).

It is found in the cytoplasm. It carries out the reaction (2R,3S)-3-isopropylmalate + NAD(+) = 4-methyl-2-oxopentanoate + CO2 + NADH. Its pathway is amino-acid biosynthesis; L-leucine biosynthesis; L-leucine from 3-methyl-2-oxobutanoate: step 3/4. Its function is as follows. Catalyzes the oxidation of 3-carboxy-2-hydroxy-4-methylpentanoate (3-isopropylmalate) to 3-carboxy-4-methyl-2-oxopentanoate. The product decarboxylates to 4-methyl-2 oxopentanoate. The chain is 3-isopropylmalate dehydrogenase from Nitrobacter winogradskyi (strain ATCC 25391 / DSM 10237 / CIP 104748 / NCIMB 11846 / Nb-255).